We begin with the raw amino-acid sequence, 562 residues long: Probable sesquiterpene synthase (562 aa).

Residues aspartate 315, aspartate 319, and glutamate 467 each contribute to the Mg(2+) site. A DDXXD motif motif is present at residues 315-319 (DDIYD).

It belongs to the terpene synthase family. Tpsa subfamily. Requires Mg(2+) as cofactor. Mn(2+) is required as a cofactor.

Sesquiterpene synthase. The chain is Probable sesquiterpene synthase (STPS) from Santalum murrayanum (Bitter quandong).